The sequence spans 278 residues: Type II restriction enzyme AgeI (278 aa).

The protein belongs to the BsaWI type II restriction endonuclease family.

It carries out the reaction Endonucleolytic cleavage of DNA to give specific double-stranded fragments with terminal 5'-phosphates.. Functionally, a P subtype restriction enzyme that recognizes the double-stranded sequence 5'-ACCGGT-3' and cleaves after A-1. The polypeptide is Type II restriction enzyme AgeI (ageIR) (Thalassovita gelatinovora (Thalassobius gelatinovorus)).